The chain runs to 378 residues: Apolipoprotein A-IV (378 aa).

The first 20 residues, Met1–Ala20, serve as a signal peptide directing secretion. 13 consecutive repeat copies span residues Asp33–Leu54, Ser60–Trp81, Glu82–Gly98, Pro110–Gly130, Pro131–Thr152, Ser153–Thr174, Pro175–Thr196, Pro197–Ala218, Pro219–Lys240, Lys241–Ala262, Pro263–His280, Lys281–Gly302, and Pro303–Gly324. Residues Asp33–Gly324 form a 13 X 22 AA approximate tandem repeats region. The interval Glu354–Ser378 is disordered.

This sequence belongs to the apolipoprotein A1/A4/E family. Homodimer.

The protein resides in the secreted. Its function is as follows. May have a role in chylomicrons and VLDL secretion and catabolism. Required for efficient activation of lipoprotein lipase by ApoC-II; potent activator of LCAT. Apoa-IV is a major component of HDL and chylomicrons. The chain is Apolipoprotein A-IV from Canis lupus familiaris (Dog).